Reading from the N-terminus, the 194-residue chain is FK506-binding protein 3 (194 aa).

A signal peptide spans methionine 1–serine 19. Residues glycine 44–glutamate 133 enclose the PPIase FKBP-type domain. The helical transmembrane segment at valine 148–isoleucine 168 threads the bilayer. Residues aspartate 173–asparagine 194 form a disordered region. Residues lysine 184–asparagine 194 are compositionally biased toward basic residues.

This sequence belongs to the FKBP-type PPIase family.

The protein localises to the membrane. It carries out the reaction [protein]-peptidylproline (omega=180) = [protein]-peptidylproline (omega=0). Inhibited by both FK506 and rapamycin. PPIases accelerate the folding of proteins by catalyzing the cis-trans isomerization of proline imidic peptide bonds in oligopeptides. This Dictyostelium discoideum (Social amoeba) protein is FK506-binding protein 3 (fkbp3).